We begin with the raw amino-acid sequence, 301 residues long: Putative dynamin-related protein 4A (301 aa).

The Dynamin-type G domain occupies 59–301 (GIQLPTIVVV…LIDGDIVGIL (243 aa)). Positions 69–76 (GDQSSGKS) are G1 motif. 69-76 (GDQSSGKS) contacts GTP. The G2 motif stretch occupies residues 94-96 (CTR). The G3 motif stretch occupies residues 168-171 (DLPG). GTP is bound by residues 168 to 172 (DLPGI) and 237 to 240 (TKAD). Residues 237-240 (TKAD) form a G4 motif region. Position 270 (Glu-270) is a region of interest, G5 motif.

This sequence belongs to the TRAFAC class dynamin-like GTPase superfamily. Dynamin/Fzo/YdjA family.

In Arabidopsis thaliana (Mouse-ear cress), this protein is Putative dynamin-related protein 4A (DRP4A).